The following is a 112-amino-acid chain: Protein 4.2 (112 aa).

The segment at 64 to 93 is disordered; sequence KPDGLNHQVTQGKKSHTQSQQTGPTTLTSD. Positions 70–92 are enriched in polar residues; it reads HQVTQGKKSHTQSQQTGPTTLTS.

The polypeptide is Protein 4.2 (Escherichia phage T7 (Bacteriophage T7)).